A 360-amino-acid polypeptide reads, in one-letter code: Phenylalanine--tRNA ligase alpha subunit (360 aa).

Glutamate 260 contacts Mg(2+).

The protein belongs to the class-II aminoacyl-tRNA synthetase family. Phe-tRNA synthetase alpha subunit type 1 subfamily. In terms of assembly, tetramer of two alpha and two beta subunits. Mg(2+) serves as cofactor.

The protein localises to the cytoplasm. It catalyses the reaction tRNA(Phe) + L-phenylalanine + ATP = L-phenylalanyl-tRNA(Phe) + AMP + diphosphate + H(+). This is Phenylalanine--tRNA ligase alpha subunit from Bartonella tribocorum (strain CIP 105476 / IBS 506).